Reading from the N-terminus, the 271-residue chain is Short chain dehydrogenase virK (271 aa).

L13, D59, N87, Y168, K172, V201, and T203 together coordinate NADP(+). Y168 serves as the catalytic Proton donor. The Lowers pKa of active site Tyr role is filled by K172.

This sequence belongs to the short-chain dehydrogenases/reductases (SDR) family.

It functions in the pathway secondary metabolite biosynthesis. Its function is as follows. Short chain dehydrogenase; part of the gene cluster that mediates the biosynthesis of virensols and trichoxide, fungal natural products that contain or are derived from a salicylaldehyde core. The pathway begins with the synthesis of the reduced chain in virensol C by the highly reducing polyketide synthase virA via condensation of one acetate and 8 malonate units. VirA has interesting programming rules since the first 2 ketides are fully reduced, the 3 following ketides undergo beta-dehydration, and the last 3 ketides are only reduced to beta-hydroxys to yield the trihydroxy portion. The production of aldehyde virensol C by virA alone is surprising, since virA does not contain a reductase (R) domain that is typically associated with reductive product release in HRPKS. The cupin-domain enzyme virC is involved in enhancing virA product turnover. The short-chain dehydrogenase virB then oxidizes the C-7 alcohol of virensol C to a ketone, yielding virensol D. Virensol D is further transformed to salicylaldehyde 5-deoxyaurocitrin by the short-chain dehydrogenase virD. VirD catalyzes the dehydrogenation of C-3 to form the beta-ketone aldehyde, which is followed by the generation of the nucleophilic C-2 that is required for the intramolecular aldol condensation between C-2 and C-7, itself followed by dehydration and aromatization which leads to salicylaldehyde 5-deoxyaurocitrin. While the dehydrogenation of virensol D is definitely catalyzed by virD, the aldol condensation and dehydration may be uncatalyzed or assisted by virD. The short chain dehydrogenase virG then converts salicylaldehyde 5-deoxyaurocitrin into virensol B which is further hydroxylated by the cytochrome P450 monooxygenase virE to yield the hydroquinone virensol A. VirI then may oxidize virensol A to form the quinone, while virH performs the epoxidation. Finally, the two remaining short-chain dehydrogenases, virK and virL, are probably responsible for reducing the ketones to the corresponding alcohols to furnish the epoxycyclohexanol structure in trichoxide. The chain is Short chain dehydrogenase virK from Hypocrea virens (strain Gv29-8 / FGSC 10586) (Gliocladium virens).